A 498-amino-acid chain; its full sequence is L-ornithine N(5)-monooxygenase (498 aa).

FAD-binding positions include 80–88 and Q99; that span reads ERQKQFAWH. Residue K104 coordinates substrate. V165 is an FAD binding site. NADP(+) contacts are provided by residues 251-254 and R276; that span reads SGQS. Residues 290–293 and N320 contribute to the substrate site; that span reads NEVF. An NADP(+)-binding site is contributed by 320-322; the sequence is NYS. FAD is bound at residue 463 to 465; the sequence is SLL. A substrate-binding site is contributed by S466.

Belongs to the lysine N(6)-hydroxylase/L-ornithine N(5)-oxygenase family. In terms of assembly, homotetramer. FAD is required as a cofactor.

The catalysed reaction is L-ornithine + NADPH + O2 = N(5)-hydroxy-L-ornithine + NADP(+) + H2O. It catalyses the reaction L-ornithine + NADH + O2 = N(5)-hydroxy-L-ornithine + NAD(+) + H2O. Its pathway is siderophore biosynthesis. Catalyzes the conversion of L-ornithine to N(5)-hydroxyornithine, the first step in the biosynthesis of all hydroxamate-containing siderophores, such as the secreted triacetylfusarinine C (TAFC) involved in iron uptake and the intracellular iron storage compound desferriferricrocin (DFFC). In Emericella nidulans (strain FGSC A4 / ATCC 38163 / CBS 112.46 / NRRL 194 / M139) (Aspergillus nidulans), this protein is L-ornithine N(5)-monooxygenase.